Reading from the N-terminus, the 255-residue chain is Myogenic factor 5 (255 aa).

Positions 83 to 134 (DRRKAATMRERRRLKKVNQAFDTLKRCTTTNPNQRLPKVEILRNAIRYIESL) constitute a bHLH domain. The tract at residues 217–249 (SEQPGLPLQDPASLSPVASTDSQPATPGASSSR) is disordered. Positions 232 to 249 (PVASTDSQPATPGASSSR) are enriched in polar residues.

Efficient DNA binding requires dimerization with another bHLH protein.

The protein resides in the nucleus. In terms of biological role, acts as a transcriptional activator that promotes transcription of muscle-specific target genes and plays a role in muscle differentiation. Together with MYOG and MYOD1, co-occupies muscle-specific gene promoter core region during myogenesis. Induces fibroblasts to differentiate into myoblasts. Probable sequence specific DNA-binding protein. The protein is Myogenic factor 5 (MYF5) of Bos taurus (Bovine).